A 298-amino-acid chain; its full sequence is MNQEVKSGKILSPSTPWTERQVPGIQVANEQQSLKATSTEPTIECPECHALVTRTAIAFNAYVCPSCDEHLRMKARDRLTWFFDQVDAELGQEFSAKDPLKFVDSKPYPERMREAQSKTGETEALVVMQGTLNNVSMIACAFEFDFMGGSMGTVVGDRFVQAAERAIEQKQALICFAASGGARMQEGMLSLMQMARTSAAIQRMKDAGLPYIVVLTHPVYGGVTASLAMLGDVHIAEPKAMIGFAGKRVIEQTVRETLEEPFQRAEYLLDHGVVDQIVHRHALRDTVSRIVSKLMNLP.

Residues 41 to 298 enclose the CoA carboxyltransferase N-terminal domain; sequence PTIECPECHA…RIVSKLMNLP (258 aa). Residues cysteine 45, cysteine 48, cysteine 64, and cysteine 67 each contribute to the Zn(2+) site. The C4-type zinc finger occupies 45-67; that stretch reads CPECHALVTRTAIAFNAYVCPSC.

The protein belongs to the AccD/PCCB family. As to quaternary structure, acetyl-CoA carboxylase is a heterohexamer composed of biotin carboxyl carrier protein (AccB), biotin carboxylase (AccC) and two subunits each of ACCase subunit alpha (AccA) and ACCase subunit beta (AccD). It depends on Zn(2+) as a cofactor.

Its subcellular location is the cytoplasm. It carries out the reaction N(6)-carboxybiotinyl-L-lysyl-[protein] + acetyl-CoA = N(6)-biotinyl-L-lysyl-[protein] + malonyl-CoA. The protein operates within lipid metabolism; malonyl-CoA biosynthesis; malonyl-CoA from acetyl-CoA: step 1/1. Component of the acetyl coenzyme A carboxylase (ACC) complex. Biotin carboxylase (BC) catalyzes the carboxylation of biotin on its carrier protein (BCCP) and then the CO(2) group is transferred by the transcarboxylase to acetyl-CoA to form malonyl-CoA. The chain is Acetyl-coenzyme A carboxylase carboxyl transferase subunit beta from Acinetobacter baylyi (strain ATCC 33305 / BD413 / ADP1).